A 172-amino-acid polypeptide reads, in one-letter code: Dual-action ribosomal maturation protein DarP (172 aa).

The protein belongs to the DarP family.

It is found in the cytoplasm. Member of a network of 50S ribosomal subunit biogenesis factors which assembles along the 30S-50S interface, preventing incorrect 23S rRNA structures from forming. Promotes peptidyl transferase center (PTC) maturation. The polypeptide is Dual-action ribosomal maturation protein DarP (Ectopseudomonas mendocina (strain ymp) (Pseudomonas mendocina)).